Reading from the N-terminus, the 171-residue chain is uncharacterized protein (171 aa).

The tract at residues Thr56–Met83 is disordered. A compositionally biased stretch (polar residues) spans Val57–Ala77. Positions Lys113 to Phe170 constitute a J domain.

This is an uncharacterized protein from Sinorhizobium sp.